Consider the following 320-residue polypeptide: Pyrroline-5-carboxylate reductase 1, mitochondrial (320 aa).

The residue at position 2 (S2) is an N-acetylserine. NADP(+)-binding positions include 6-11 and S34; that span reads IGAGQL. NADPH is bound by residues A8, Q10, L11, S34, D36, N56, V70, K71, and A97. Residues N56, 69–72, and 95–97 each bind NADP(+); these read AVKP and CAA. E164 lines the L-proline pocket. An NADPH-binding site is contributed by N230. Residues A237 and T238 each coordinate L-proline. At S278 the chain carries Phosphoserine. The tract at residues 292 to 320 is disordered; it reads LDSPPGTSLAPSGHSKLLPRSMAPAGKQD.

The protein belongs to the pyrroline-5-carboxylate reductase family. Homodecamer; composed of 5 homodimers. Interacts with LTO1.

It localises to the mitochondrion. The enzyme catalyses L-proline + NADP(+) = (S)-1-pyrroline-5-carboxylate + NADPH + 2 H(+). The catalysed reaction is L-proline + NAD(+) = (S)-1-pyrroline-5-carboxylate + NADH + 2 H(+). The protein operates within amino-acid biosynthesis; L-proline biosynthesis; L-proline from L-glutamate 5-semialdehyde: step 1/1. Oxidoreductase that catalyzes the last step in proline biosynthesis, which corresponds to the reduction of pyrroline-5-carboxylate to L-proline using NAD(P)H. At physiologic concentrations, has higher specific activity in the presence of NADH. Involved in the cellular response to oxidative stress. This is Pyrroline-5-carboxylate reductase 1, mitochondrial (PYCR1) from Bos taurus (Bovine).